A 692-amino-acid chain; its full sequence is Elongation factor G 2 (692 aa).

A tr-type G domain is found at 8–283; that stretch reads EKTRNIGIMA…AVIDYMPSPV (276 aa). Residues 17-24, 81-85, and 135-138 each bind GTP; these read AHIDAGKT, DTPGH, and NKMD.

Belongs to the TRAFAC class translation factor GTPase superfamily. Classic translation factor GTPase family. EF-G/EF-2 subfamily.

The protein localises to the cytoplasm. Catalyzes the GTP-dependent ribosomal translocation step during translation elongation. During this step, the ribosome changes from the pre-translocational (PRE) to the post-translocational (POST) state as the newly formed A-site-bound peptidyl-tRNA and P-site-bound deacylated tRNA move to the P and E sites, respectively. Catalyzes the coordinated movement of the two tRNA molecules, the mRNA and conformational changes in the ribosome. This Syntrophotalea carbinolica (strain DSM 2380 / NBRC 103641 / GraBd1) (Pelobacter carbinolicus) protein is Elongation factor G 2.